Consider the following 253-residue polypeptide: Type III pantothenate kinase (253 aa).

6-13 provides a ligand contact to ATP; sequence DVGNTNTV. 103-106 provides a ligand contact to substrate; that stretch reads GADR. The Proton acceptor role is filled by Asp-105. Residue Asp-125 coordinates K(+). Thr-128 serves as a coordination point for ATP. A substrate-binding site is contributed by Thr-180.

It belongs to the type III pantothenate kinase family. As to quaternary structure, homodimer. NH4(+) is required as a cofactor. It depends on K(+) as a cofactor.

It is found in the cytoplasm. The enzyme catalyses (R)-pantothenate + ATP = (R)-4'-phosphopantothenate + ADP + H(+). It participates in cofactor biosynthesis; coenzyme A biosynthesis; CoA from (R)-pantothenate: step 1/5. Catalyzes the phosphorylation of pantothenate (Pan), the first step in CoA biosynthesis. The chain is Type III pantothenate kinase from Parafrankia sp. (strain EAN1pec).